The primary structure comprises 118 residues: Large ribosomal subunit protein bL20 (118 aa).

Belongs to the bacterial ribosomal protein bL20 family.

In terms of biological role, binds directly to 23S ribosomal RNA and is necessary for the in vitro assembly process of the 50S ribosomal subunit. It is not involved in the protein synthesizing functions of that subunit. The chain is Large ribosomal subunit protein bL20 from Azotobacter vinelandii.